Consider the following 415-residue polypeptide: BTB/POZ and MATH domain-containing protein 6 (415 aa).

The disordered stretch occupies residues methionine 1–threonine 33. Residues asparagine 35–valine 169 form the MATH domain. The 67-residue stretch at serine 205 to valine 271 folds into the BTB domain. A disordered region spans residues serine 385–threonine 415. Residues serine 392 to threonine 405 show a composition bias toward polar residues.

Belongs to the Tdpoz family. In terms of assembly, heterodimer with BPM1. Interacts with RAP2-4. Interacts with CUL3A. Binds to MYB56 at the promoter of FLOWERING LOCUS T (FT). In terms of tissue distribution, ubiquitous.

Its subcellular location is the nucleus. The protein resides in the cytoplasm. It functions in the pathway protein modification; protein ubiquitination. Its function is as follows. May act as a substrate-specific adapter of an E3 ubiquitin-protein ligase complex (CUL3-RBX1-BTB) which mediates the ubiquitination and subsequent proteasomal degradation of target proteins. The chain is BTB/POZ and MATH domain-containing protein 6 (BPM6) from Arabidopsis thaliana (Mouse-ear cress).